The following is a 419-amino-acid chain: E3 ubiquitin-protein ligase RNF130 (419 aa).

A signal peptide spans 1–27; the sequence is MSGAARAGPARLAALALLTCSLWPTRA. The Extracellular portion of the chain corresponds to 28-194; that stretch reads DNASQEYYTA…MPPKNFSRGS (167 aa). N-linked (GlcNAc...) asparagine glycosylation is found at Asn29, Asn40, Asn112, Asn135, Asn172, and Asn189. Residues 105–176 enclose the PA domain; sequence IALLQRGNCT…SYLEKNISVQ (72 aa). Residues 195-217 form a helical membrane-spanning segment; that stretch reads LVFVSISFIVLMIISSAWLIFYF. At 218-419 the chain is on the cytoplasmic side; sequence IQKIRYTNAR…SLNANEVEWF (202 aa). The segment at 264 to 305 adopts an RING-type zinc-finger fold; the sequence is CAVCIESYKQNDVVRVLPCKHVFHKSCVDPWLSEHCTCPMCK.

In terms of tissue distribution, expression is highest in liver, with lesser amounts in the lung, spleen, brain, heart, kidney and testis.

It is found in the membrane. It localises to the cytoplasm. It catalyses the reaction S-ubiquitinyl-[E2 ubiquitin-conjugating enzyme]-L-cysteine + [acceptor protein]-L-lysine = [E2 ubiquitin-conjugating enzyme]-L-cysteine + N(6)-ubiquitinyl-[acceptor protein]-L-lysine.. It participates in protein modification; protein ubiquitination. Its function is as follows. Acts as an E3 ubiquitin-protein ligase. May have a role during the programmed cell death of hematopoietic cells. This Mus musculus (Mouse) protein is E3 ubiquitin-protein ligase RNF130.